Reading from the N-terminus, the 500-residue chain is Transcription termination factor MTERF8, chloroplastic (500 aa).

Residues 1–64 (MVILSLVSCS…NHREPALTFR (64 aa)) constitute a chloroplast transit peptide.

This sequence belongs to the mTERF family.

The protein resides in the plastid. The protein localises to the chloroplast. In terms of biological role, transcription termination factor that is transcriptionally active in chloroplasts. The protein is Transcription termination factor MTERF8, chloroplastic of Arabidopsis thaliana (Mouse-ear cress).